Reading from the N-terminus, the 1373-residue chain is DNA-directed RNA polymerase subunit beta'' (1373 aa).

Residues Cys-220, Cys-291, Cys-298, and Cys-301 each coordinate Zn(2+).

The protein belongs to the RNA polymerase beta' chain family. RpoC2 subfamily. As to quaternary structure, in plastids the minimal PEP RNA polymerase catalytic core is composed of four subunits: alpha, beta, beta', and beta''. When a (nuclear-encoded) sigma factor is associated with the core the holoenzyme is formed, which can initiate transcription. Requires Zn(2+) as cofactor.

It is found in the plastid. The protein resides in the chloroplast. It catalyses the reaction RNA(n) + a ribonucleoside 5'-triphosphate = RNA(n+1) + diphosphate. Functionally, DNA-dependent RNA polymerase catalyzes the transcription of DNA into RNA using the four ribonucleoside triphosphates as substrates. The polypeptide is DNA-directed RNA polymerase subunit beta'' (Silene latifolia (White campion)).